The sequence spans 534 residues: Glucan endo-1,3-beta-glucosidase 12 (534 aa).

Residues 1–24 (MGQRLNLVFWIFVSILAFLNFGMA) form the signal peptide. The active-site Proton donor is glutamate 120. N-linked (GlcNAc...) asparagine glycosylation is present at asparagine 127. Glutamate 264 acts as the Nucleophile in catalysis. N-linked (GlcNAc...) asparagine glycosylation is found at asparagine 336, asparagine 357, and asparagine 375. The disordered stretch occupies residues 348–379 (ENTTPVSPTNSTTGTSPSPSSSPIINGNSTVT). Over residues 349-377 (NTTPVSPTNSTTGTSPSPSSSPIINGNST) the composition is skewed to low complexity. Cysteines 392 and 455 form a disulfide. N-linked (GlcNAc...) asparagine glycosylation is found at asparagine 485, asparagine 491, and asparagine 495. Serine 507 is lipidated: GPI-anchor amidated serine. A propeptide spans 508 to 534 (STNEAFRQMVVAVSVLLPCFVVCSSIW) (removed in mature form).

The protein belongs to the glycosyl hydrolase 17 family. In terms of processing, contains two additional disulfide bonds.

The protein localises to the secreted. It localises to the cell wall. Its subcellular location is the cell membrane. It catalyses the reaction Hydrolysis of (1-&gt;3)-beta-D-glucosidic linkages in (1-&gt;3)-beta-D-glucans.. The polypeptide is Glucan endo-1,3-beta-glucosidase 12 (Arabidopsis thaliana (Mouse-ear cress)).